The sequence spans 216 residues: GTP cyclohydrolase-2 (216 aa).

50–54 (RIHSE) provides a ligand contact to GTP. Positions 55, 66, and 68 each coordinate Zn(2+). GTP is bound by residues Q71, 93 to 95 (EGR), and T115. The active-site Proton acceptor is D127. R129 serves as the catalytic Nucleophile. GTP contacts are provided by T150 and K155.

The protein belongs to the GTP cyclohydrolase II family. The cofactor is Zn(2+).

The enzyme catalyses GTP + 4 H2O = 2,5-diamino-6-hydroxy-4-(5-phosphoribosylamino)-pyrimidine + formate + 2 phosphate + 3 H(+). The protein operates within cofactor biosynthesis; riboflavin biosynthesis; 5-amino-6-(D-ribitylamino)uracil from GTP: step 1/4. Its function is as follows. Catalyzes the conversion of GTP to 2,5-diamino-6-ribosylamino-4(3H)-pyrimidinone 5'-phosphate (DARP), formate and pyrophosphate. The chain is GTP cyclohydrolase-2 from Histophilus somni (strain 129Pt) (Haemophilus somnus).